The chain runs to 368 residues: 4-hydroxy-3-methylbut-2-en-1-yl diphosphate synthase (flavodoxin) (368 aa).

Residues Cys-271, Cys-274, Cys-306, and Glu-313 each contribute to the [4Fe-4S] cluster site.

This sequence belongs to the IspG family. Requires [4Fe-4S] cluster as cofactor.

The enzyme catalyses (2E)-4-hydroxy-3-methylbut-2-enyl diphosphate + oxidized [flavodoxin] + H2O + 2 H(+) = 2-C-methyl-D-erythritol 2,4-cyclic diphosphate + reduced [flavodoxin]. It functions in the pathway isoprenoid biosynthesis; isopentenyl diphosphate biosynthesis via DXP pathway; isopentenyl diphosphate from 1-deoxy-D-xylulose 5-phosphate: step 5/6. Converts 2C-methyl-D-erythritol 2,4-cyclodiphosphate (ME-2,4cPP) into 1-hydroxy-2-methyl-2-(E)-butenyl 4-diphosphate. The polypeptide is 4-hydroxy-3-methylbut-2-en-1-yl diphosphate synthase (flavodoxin) (Haemophilus influenzae (strain ATCC 51907 / DSM 11121 / KW20 / Rd)).